We begin with the raw amino-acid sequence, 465 residues long: Uronate isomerase (465 aa).

This sequence belongs to the metallo-dependent hydrolases superfamily. Uronate isomerase family.

It carries out the reaction D-glucuronate = D-fructuronate. The catalysed reaction is aldehydo-D-galacturonate = keto-D-tagaturonate. The protein operates within carbohydrate metabolism; pentose and glucuronate interconversion. This chain is Uronate isomerase, found in Bacillus velezensis (strain DSM 23117 / BGSC 10A6 / LMG 26770 / FZB42) (Bacillus amyloliquefaciens subsp. plantarum).